We begin with the raw amino-acid sequence, 69 residues long: uncharacterized protein (69 aa).

Residues 5-60 enclose the HTH cro/C1-type domain; sequence IREHRKELGLTQEELAERVGVTRQTIIALEKGRYSPSLILAHRIARALGREHIEDI. The segment at residues 16-35 is a DNA-binding region (H-T-H motif); it reads QEELAERVGVTRQTIIALEK.

This is an uncharacterized protein from Methanothermobacter thermautotrophicus (strain ATCC 29096 / DSM 1053 / JCM 10044 / NBRC 100330 / Delta H) (Methanobacterium thermoautotrophicum).